The sequence spans 499 residues: UDP-N-acetylmuramoylalanine--D-glutamate ligase (499 aa).

120-126 (GTNGKTT) is a binding site for ATP.

Belongs to the MurCDEF family.

It is found in the cytoplasm. The enzyme catalyses UDP-N-acetyl-alpha-D-muramoyl-L-alanine + D-glutamate + ATP = UDP-N-acetyl-alpha-D-muramoyl-L-alanyl-D-glutamate + ADP + phosphate + H(+). It functions in the pathway cell wall biogenesis; peptidoglycan biosynthesis. Its function is as follows. Cell wall formation. Catalyzes the addition of glutamate to the nucleotide precursor UDP-N-acetylmuramoyl-L-alanine (UMA). This is UDP-N-acetylmuramoylalanine--D-glutamate ligase from Nostoc punctiforme (strain ATCC 29133 / PCC 73102).